A 286-amino-acid chain; its full sequence is Lipid phosphate phosphatase epsilon 2, chloroplastic (286 aa).

A chloroplast-targeting transit peptide spans 1–60; it reads MAASSSSLLLLHKPTYNFHFAASSVPTYINSARFRISSSIFPLDRRRRRRIWSVSGFKSM. Helical transmembrane passes span 133-149, 173-193, 194-214, 226-246, and 260-280; these read LWAV…SVAL, AQSI…WLGT, NVLS…FTWL, VVVG…TWNS, and IALF…VLLN.

It belongs to the PA-phosphatase related phosphoesterase family. As to expression, expressed in root tips, root branch points, cotyledons and leaves.

The protein resides in the plastid. It localises to the chloroplast inner membrane. Its activity is regulated as follows. Inhibited by Mg(2+). Its function is as follows. Exhibits phosphatidate phosphatase (PAP) activity in vitro. May play a secondary role as PAP in plastids. This is Lipid phosphate phosphatase epsilon 2, chloroplastic (LPPE2) from Arabidopsis thaliana (Mouse-ear cress).